Consider the following 210-residue polypeptide: Guanylate kinase (210 aa).

The 179-residue stretch at Gly-6–Arg-184 folds into the Guanylate kinase-like domain. Ala-13–Thr-20 lines the ATP pocket.

It belongs to the guanylate kinase family.

It is found in the cytoplasm. The enzyme catalyses GMP + ATP = GDP + ADP. Essential for recycling GMP and indirectly, cGMP. The chain is Guanylate kinase from Chromobacterium violaceum (strain ATCC 12472 / DSM 30191 / JCM 1249 / CCUG 213 / NBRC 12614 / NCIMB 9131 / NCTC 9757 / MK).